The following is a 411-amino-acid chain: Serine--tRNA ligase (411 aa).

An L-serine-binding site is contributed by T226–E228. Position 257–259 (R257–E259) interacts with ATP. E280 lines the L-serine pocket. E344–S347 lines the ATP pocket. An L-serine-binding site is contributed by S379.

The protein belongs to the class-II aminoacyl-tRNA synthetase family. Type-1 seryl-tRNA synthetase subfamily. In terms of assembly, homodimer. The tRNA molecule binds across the dimer.

It is found in the cytoplasm. The enzyme catalyses tRNA(Ser) + L-serine + ATP = L-seryl-tRNA(Ser) + AMP + diphosphate + H(+). It carries out the reaction tRNA(Sec) + L-serine + ATP = L-seryl-tRNA(Sec) + AMP + diphosphate + H(+). The protein operates within aminoacyl-tRNA biosynthesis; selenocysteinyl-tRNA(Sec) biosynthesis; L-seryl-tRNA(Sec) from L-serine and tRNA(Sec): step 1/1. Catalyzes the attachment of serine to tRNA(Ser). Is also able to aminoacylate tRNA(Sec) with serine, to form the misacylated tRNA L-seryl-tRNA(Sec), which will be further converted into selenocysteinyl-tRNA(Sec). The sequence is that of Serine--tRNA ligase from Campylobacter jejuni subsp. jejuni serotype O:6 (strain 81116 / NCTC 11828).